Reading from the N-terminus, the 908-residue chain is Glutamate receptor ionotropic, kainate 2 (908 aa).

The signal sequence occupies residues 1–31; that stretch reads MKIISPVLSNLVFSRSIKVLLCLLWIGYSQG. The Extracellular portion of the chain corresponds to 32 to 561; that stretch reads TTHVLRFGGI…VFSFLNPLSP (530 aa). Asn67, Asn73, Asn275, Asn378, Asn412, Asn423, and Asn430 each carry an N-linked (GlcNAc...) asparagine glycan. Cys96 and Cys347 are oxidised to a cystine. 3 residues coordinate L-glutamate: Pro516, Ala518, and Arg523. Asn546 carries N-linked (GlcNAc...) asparagine glycosylation. The chain crosses the membrane as a helical span at residues 562 to 582; it reads DIWMYILLAYLGVSCVLFVIA. The Cytoplasmic segment spans residues 583-638; sequence RFSPYEWYNPHPCNPDSDVVENNFTLLNSFWFGVGALMQQGSELMPKALSTRIVGG. The chain crosses the membrane as a helical span at residues 639-659; the sequence is IWWFFTLIIISSYTANLAAFL. Over 660–819 the chain is Extracellular; sequence TVERMESPID…KEASALGVQN (160 aa). L-glutamate contacts are provided by Ala689, Thr690, and Glu738. The cysteines at positions 750 and 804 are disulfide-linked. N-linked (GlcNAc...) asparagine glycosylation is present at Asn751. A helical membrane pass occupies residues 820-840; sequence IGGIFIVLAAGLVLSVFVAVG. Topologically, residues 841 to 908 are cytoplasmic; that stretch reads EFLYKSKKNA…RRLPGKETMA (68 aa). Phosphoserine; by PKC is present on residues Ser846 and Ser868. A Glycyl lysine isopeptide (Lys-Gly) (interchain with G-Cter in SUMO1) cross-link involves residue Lys886.

This sequence belongs to the glutamate-gated ion channel (TC 1.A.10.1) family. GRIK2 subfamily. Homotetramer and heterotetramer with GRIK5. Tetramers may be formed by the dimerization of dimers. Assembles into a kainate-gated homomeric channel that does not bind AMPA. Can form functional heteromeric receptors with GRIK3. Forms a heteromeric complex with GRIK4 and GRIK5. Interacts with DLG4. Interacts (via C-terminus) with KLHL17 (via kelch repeats); the interaction targets GRIK2 for degradation via ubiquitin-proteasome pathway. Interacts with NETO2. Post-translationally, sumoylation mediates kainate receptor-mediated endocytosis and regulates synaptic transmission. Sumoylation is enhanced by PIAS3 and desumoylated by SENP1. Ubiquitinated. Ubiquitination regulates the GRIK2 levels at the synapse by leading kainate receptor degradation through proteasome. In terms of processing, phosphorylated by PKC at Ser-868 upon agonist activation, this directly enhance sumoylation. Expressed in the hippocampal mossy fiber synapses (at protein level). Most abundant in the cerebellum and the hypothalamus. Expressed in a proportion of dorsal root ganglion (DRG) neurons (13.6%); predominantly small diameter DRG neurons (75%) with the remainder expressed in medium diameter DRG neurons.

The protein resides in the cell membrane. It is found in the postsynaptic cell membrane. It catalyses the reaction Ca(2+)(in) = Ca(2+)(out). The enzyme catalyses Na(+)(in) = Na(+)(out). Its activity is regulated as follows. Cold receptor activity activated by temperatures between 10-19 degrees Celsius. Ionotropic glutamate receptor that functions as a cation-permeable ligand-gated ion channel, gated by L-glutamate and the glutamatergic agonist kainic acid. L-glutamate acts as an excitatory neurotransmitter at many synapses in the central nervous system. Binding of the excitatory neurotransmitter L-glutamate induces a conformation change, leading to the opening of the cation channel, and thereby converts the chemical signal to an electrical impulse. The receptor then desensitizes rapidly and enters a transient inactive state, characterized by the presence of bound agonist. Modulates cell surface expression of NETO2. In association with GRIK3, involved in presynaptic facilitation of glutamate release at hippocampal mossy fiber synapses. In terms of biological role, independent of its ionotropic glutamate receptor activity, acts as a thermoreceptor conferring sensitivity to cold temperatures. Functions in dorsal root ganglion neurons. Functionally, ionotropic glutamate receptor that functions as a cation-permeable ligand-gated ion channel, gated by L-glutamate and the glutamatergic agonist kainic acid. This Mus musculus (Mouse) protein is Glutamate receptor ionotropic, kainate 2 (Grik2).